We begin with the raw amino-acid sequence, 503 residues long: Cytochrome c-552 (503 aa).

The signal sequence occupies residues 1 to 16; that stretch reads MKKNTIILVGALIAIA. Heme c is bound at residue His-102. The heme site is built by Cys-130, Cys-133, and Lys-134. Residues Cys-168, Cys-171, His-172, Cys-210, Cys-213, and His-214 each coordinate heme c. The Ca(2+) site is built by Glu-216, Tyr-217, Lys-273, and Gln-275. Position 217 (Tyr-217) interacts with substrate. Substrate is bound at residue His-276. Residues His-287, Cys-294, Cys-297, His-298, His-312, Cys-325, Cys-328, His-329, and His-404 each contribute to the heme c site.

This sequence belongs to the cytochrome c-552 family. Ca(2+) is required as a cofactor. It depends on heme c as a cofactor.

Its subcellular location is the periplasm. The enzyme catalyses 6 Fe(III)-[cytochrome c] + NH4(+) + 2 H2O = 6 Fe(II)-[cytochrome c] + nitrite + 8 H(+). It functions in the pathway nitrogen metabolism; nitrate reduction (assimilation). Its function is as follows. Catalyzes the reduction of nitrite to ammonia, consuming six electrons in the process. The chain is Cytochrome c-552 from Maridesulfovibrio salexigens (strain ATCC 14822 / DSM 2638 / NCIMB 8403 / VKM B-1763) (Desulfovibrio salexigens).